We begin with the raw amino-acid sequence, 617 residues long: MQSQLKACGDAPAPSCSLHHRRTISKKPSNGGNSGGGGGGVNSAYLATDVTTLDINAMFQSKKMKRHGAGVTAPSTPANYLGASAGAGQANPAHFNFPSYLNPASFYPNVDLLGGSSEHLPPLMSVPAYKPTSMLHGFSDAASAMDFAQLTEELNALQNLSASFPNSTPNAFQSLFATDSPSSFLTSSAVSSHLAKPSPLTANSVRGAGGRKNRMVEVKMINERPVVIVSDPQAASASARSQIVHLNRNVLGVLKGLEASKKRSISAEPLYSRKVFIGGLPIDVTEEEVWATFGWFGKVLVDWPRRPEHGGRGDFYEMDMGRRNSRSVSGYVFLVFQDEKAVQELVNACELYENKYYLQLSSPTMADKAVQVRAWRLSDIDYFCDENASVDHRRTVFIGGVPRPTRASDLAYCLQQHYGKVSYVGIDIDPELKYPKGAARVTFATAQSFVRAISGRFVQVTHADTNKRVEIKPYVMEDQHCDECQGKLCKHNYAPYFCGDSSCLQYYCEACWDRMHYAMCDNRADHRPMVRTGDQTRILPRPPHHSTSHYHHRSTPSHHHNHTHQNVTSSLLEHAPHLQNTSIISRIVNRNNQNNNSANSTPPQMKQFSAIPTAIGY.

The segment at 1–38 (MQSQLKACGDAPAPSCSLHHRRTISKKPSNGGNSGGGG) is disordered. RRM domains are found at residues 273-377 (RKVF…AWRL) and 394-465 (RTVF…HADT). Disordered regions lie at residues 534-568 (DQTR…QNVT) and 592-617 (NQNN…AIGY). Residues 542-563 (PPHHSTSHYHHRSTPSHHHNHT) are compositionally biased toward basic residues.

As to quaternary structure, interacts with fbf-1.

Cytoplasmic polyadenylation element binding protein that binds to and regulates the translation of specific mRNAs. Essential for progression through meiosis. Involved in spermatogenesis. The sequence is that of Cytoplasmic polyadenylation element-binding protein 1 (cpb-1) from Caenorhabditis japonica.